Here is a 307-residue protein sequence, read N- to C-terminus: Homoserine O-acetyltransferase (307 aa).

Catalysis depends on C142, which acts as the Acyl-thioester intermediate. Residues K163 and S192 each contribute to the substrate site. H235 acts as the Proton acceptor in catalysis. E237 is an active-site residue. Residue R249 coordinates substrate.

This sequence belongs to the MetA family.

The protein localises to the cytoplasm. It carries out the reaction L-homoserine + acetyl-CoA = O-acetyl-L-homoserine + CoA. It participates in amino-acid biosynthesis; L-methionine biosynthesis via de novo pathway; O-acetyl-L-homoserine from L-homoserine: step 1/1. Functionally, transfers an acetyl group from acetyl-CoA to L-homoserine, forming acetyl-L-homoserine. This chain is Homoserine O-acetyltransferase, found in Rhizobium johnstonii (strain DSM 114642 / LMG 32736 / 3841) (Rhizobium leguminosarum bv. viciae).